We begin with the raw amino-acid sequence, 464 residues long: ATP synthase subunit beta (464 aa).

148-155 (GGAGVGKT) provides a ligand contact to ATP.

It belongs to the ATPase alpha/beta chains family. As to quaternary structure, F-type ATPases have 2 components, CF(1) - the catalytic core - and CF(0) - the membrane proton channel. CF(1) has five subunits: alpha(3), beta(3), gamma(1), delta(1), epsilon(1). CF(0) has three main subunits: a(1), b(2) and c(9-12). The alpha and beta chains form an alternating ring which encloses part of the gamma chain. CF(1) is attached to CF(0) by a central stalk formed by the gamma and epsilon chains, while a peripheral stalk is formed by the delta and b chains.

It localises to the cell inner membrane. The catalysed reaction is ATP + H2O + 4 H(+)(in) = ADP + phosphate + 5 H(+)(out). In terms of biological role, produces ATP from ADP in the presence of a proton gradient across the membrane. The catalytic sites are hosted primarily by the beta subunits. The sequence is that of ATP synthase subunit beta from Acinetobacter baumannii (strain AB0057).